The sequence spans 645 residues: Translation factor GUF1 homolog, mitochondrial (645 aa).

One can recognise a tr-type G domain in the interval 40–215 (EKIRNFGIVA…AIVERVPAPT (176 aa)). Residues 49 to 56 (AHVDHGKS), 108 to 112 (DTPGH), and 162 to 165 (NKID) contribute to the GTP site.

This sequence belongs to the TRAFAC class translation factor GTPase superfamily. Classic translation factor GTPase family. LepA subfamily.

It localises to the mitochondrion inner membrane. It carries out the reaction GTP + H2O = GDP + phosphate + H(+). Functionally, promotes mitochondrial protein synthesis. May act as a fidelity factor of the translation reaction, by catalyzing a one-codon backward translocation of tRNAs on improperly translocated ribosomes. Binds to mitochondrial ribosomes in a GTP-dependent manner. This is Translation factor GUF1 homolog, mitochondrial from Caenorhabditis briggsae.